A 74-amino-acid polypeptide reads, in one-letter code: Defensin (74 aa).

An N-terminal signal peptide occupies residues 1-21 (MRGIYICLVFVLVCGLVSGLA). The propeptide occupies 22–34 (DVPAESEMAHLRV). 3 disulfide bridges follow: Cys40/Cys61, Cys47/Cys69, and Cys51/Cys71.

In terms of tissue distribution, expressed in the hemocytes, fat body and ovaries.

The protein resides in the secreted. In terms of biological role, antibacterial peptide mostly active against Gram-positive bacteria. In Rhipicephalus microplus (Cattle tick), this protein is Defensin.